Consider the following 529-residue polypeptide: Probable threonine/serine exporter (529 aa).

The next 10 helical transmembrane spans lie at 88-108, 168-188, 212-232, 234-254, 265-285, 312-332, 344-364, 365-385, 389-409, and 428-448; these read ITVTTIIVSALATTDTPPVTI, FALGVAMLLGGTWLTCVLAAV, VFGAGIATLVAVAAYLIAGQD, TALVATGIVVLLSGMTLVGSM, ALARLGDALFLTAGIVVGILI, MPLPILVAVSGAALSGVCLTI, AGLSAGLAELVLIGLGAAGFG, RVVATWTAAIGVGFLATLISI, APALVTATAGIMPMLPGLAVF, and LLEAAATALALGSGVVLGEFL. The disordered stretch occupies residues 482 to 501; sequence QPAKSQQPTGTGGQRWRSVA.

Belongs to the ThrE exporter (TC 2.A.79) family.

It is found in the cell membrane. It carries out the reaction L-threonine(in) + H(+)(out) = L-threonine(out) + H(+)(in). Catalyzes the export of L-threonine and L-serine from the cell to the extracellular environment. Export is dependent on the proton motive force. Required for in vitro growth and survival of bacteria inside macrophages. Increased expression is associated with low-level amikacin (AMK) resistance. The protein is Probable threonine/serine exporter of Mycobacterium tuberculosis (strain ATCC 25618 / H37Rv).